The chain runs to 509 residues: MDIRAAEISAILKEQIKNFGKEAEVSEVGQVLSVGDGIARVYGLDNVQAGEMVEFPGGIRGMALNLESDNVGVVIFGADRDIKEGDVVKRTGAIVDVPVGPELLGRVVDALGNPIDGKGPIKAKERRRVDVKAPGIIPRKSVHEPMSTGLKAIDALIPVGRGQRELVIGDRQTGKTAIILDTFLNQKPIHDNGPDKDKLYCVYVAVGQKRSTVAQFVKVLEERGALEYSIVVAATASDPAPMQYLAPFAGCAMGEYFRDNGQHALIGYDDLSKQAVAYRQMSLLLRRPPGREAYPGDVFYLHSRLLERAAKLNDENGAGSLTALPVIETQGNDVSAFIPTNVISITDGQIFLETNLFYQGIRPAVNVGLSVSRVGSSAQIKAMKQVAGSIKGELAQYREMAAFAQFGSDLDAATQRLLNRGARLTELLKQPQFSPLKTEEQVAVIYAGVNGYLDKLAVNQVGKFEEGLLASLRTEHKDVLEGIRNEKALTDDLKAKLKAAIDAFAKSFV.

Position 169–176 (169–176) interacts with ATP; sequence GDRQTGKT.

It belongs to the ATPase alpha/beta chains family. F-type ATPases have 2 components, CF(1) - the catalytic core - and CF(0) - the membrane proton channel. CF(1) has five subunits: alpha(3), beta(3), gamma(1), delta(1), epsilon(1). CF(0) has three main subunits: a(1), b(2) and c(9-12). The alpha and beta chains form an alternating ring which encloses part of the gamma chain. CF(1) is attached to CF(0) by a central stalk formed by the gamma and epsilon chains, while a peripheral stalk is formed by the delta and b chains.

The protein resides in the cell inner membrane. The catalysed reaction is ATP + H2O + 4 H(+)(in) = ADP + phosphate + 5 H(+)(out). In terms of biological role, produces ATP from ADP in the presence of a proton gradient across the membrane. The alpha chain is a regulatory subunit. The sequence is that of ATP synthase subunit alpha from Brucella abortus (strain S19).